We begin with the raw amino-acid sequence, 102 residues long: Small ribosomal subunit protein uS10 (102 aa).

This sequence belongs to the universal ribosomal protein uS10 family. In terms of assembly, part of the 30S ribosomal subunit.

Functionally, involved in the binding of tRNA to the ribosomes. This chain is Small ribosomal subunit protein uS10, found in Clostridium beijerinckii (strain ATCC 51743 / NCIMB 8052) (Clostridium acetobutylicum).